Here is a 447-residue protein sequence, read N- to C-terminus: ATP-dependent protease ATPase subunit HslU (447 aa).

ATP-binding positions include I17, 59–64 (GVGKTE), D256, E321, and R393.

Belongs to the ClpX chaperone family. HslU subfamily. As to quaternary structure, a double ring-shaped homohexamer of HslV is capped on each side by a ring-shaped HslU homohexamer. The assembly of the HslU/HslV complex is dependent on binding of ATP.

The protein localises to the cytoplasm. Functionally, ATPase subunit of a proteasome-like degradation complex; this subunit has chaperone activity. The binding of ATP and its subsequent hydrolysis by HslU are essential for unfolding of protein substrates subsequently hydrolyzed by HslV. HslU recognizes the N-terminal part of its protein substrates and unfolds these before they are guided to HslV for hydrolysis. The protein is ATP-dependent protease ATPase subunit HslU of Pseudomonas putida (strain ATCC 47054 / DSM 6125 / CFBP 8728 / NCIMB 11950 / KT2440).